The chain runs to 309 residues: uncharacterized protein (309 aa).

A disordered region spans residues 272 to 291; sequence PSLDAPSETVEAFPEPQKNL.

This is an uncharacterized protein from Bacillus subtilis (strain 168).